The sequence spans 113 residues: Defense protein 2 (113 aa).

It belongs to the attacin/sarcotoxin-2 family.

The protein resides in the secreted. In terms of biological role, has antibacterial activity against both Gram-positive and Gram-negative bacteria. This Lonomia obliqua (Moth) protein is Defense protein 2.